Reading from the N-terminus, the 166-residue chain is Cytochrome c-type biogenesis protein CcmE (166 aa).

Over methionine 1–arginine 13 the chain is Cytoplasmic. Residues leucine 14–glycine 34 traverse the membrane as a helical; Signal-anchor for type II membrane protein segment. Residues methionine 35 to threonine 166 lie on the Periplasmic side of the membrane. Residues histidine 128 and tyrosine 132 each coordinate heme. Residues glutamate 143 to threonine 166 form a disordered region.

Belongs to the CcmE/CycJ family.

It is found in the cell inner membrane. Its function is as follows. Heme chaperone required for the biogenesis of c-type cytochromes. Transiently binds heme delivered by CcmC and transfers the heme to apo-cytochromes in a process facilitated by CcmF and CcmH. This is Cytochrome c-type biogenesis protein CcmE from Caulobacter sp. (strain K31).